The chain runs to 125 residues: Calcitonin receptor-stimulating peptide 3 (125 aa).

The N-terminal stretch at 1–25 (MGFWKFPPFLILSILVLYQAGMLHA) is a signal peptide. Positions 26–79 (APFRMALGSSFDSATLTEEEMSLLLVAMVKDYVQMKATVLEQETEDFSITTQER) are excised as a propeptide. Cys81 and Cys86 form a disulfide bridge. Position 116 is a leucine amide (Leu116). Positions 122 to 125 (QPQA) are excised as a propeptide.

This sequence belongs to the calcitonin family. Mainly expressed in the thyroid gland and CNS. Found in the nerve cells of cerebrum, hippocampus, hypothalamus, pons/midbrain and thalamus.

Its subcellular location is the secreted. The polypeptide is Calcitonin receptor-stimulating peptide 3 (CRSP3) (Sus scrofa (Pig)).